Consider the following 119-residue polypeptide: Immunoglobulin heavy variable 2-70D (119 aa).

The first 19 residues, 1–19 (MDILCSTLLLLTVPSWVLS), serve as a signal peptide directing secretion. Q20 is subject to Pyrrolidone carboxylic acid. The framework-1 stretch occupies residues 20 to 44 (QVTLKESGPALVKPTQTLTLTCTFS). Residues 20–119 (QVTLKESGPA…DTATYYCARI (100 aa)) enclose the Ig-like domain. C41 and C116 are oxidised to a cystine. The interval 45–54 (GFSLSTSGMR) is complementarity-determining-1. The interval 55-71 (VSWIRQPPGKALEWLAR) is framework-2. The segment at 72-78 (IDWDDDK) is complementarity-determining-2. The segment at 79-116 (FYSTSLKTRLTISKDTSKNQVVLTMTNMDPVDTATYYC) is framework-3. Residues 117-119 (ARI) form a complementarity-determining-3 region.

As to quaternary structure, immunoglobulins are composed of two identical heavy chains and two identical light chains; disulfide-linked.

Its subcellular location is the secreted. It localises to the cell membrane. Functionally, v region of the variable domain of immunoglobulin heavy chains that participates in the antigen recognition. Immunoglobulins, also known as antibodies, are membrane-bound or secreted glycoproteins produced by B lymphocytes. In the recognition phase of humoral immunity, the membrane-bound immunoglobulins serve as receptors which, upon binding of a specific antigen, trigger the clonal expansion and differentiation of B lymphocytes into immunoglobulins-secreting plasma cells. Secreted immunoglobulins mediate the effector phase of humoral immunity, which results in the elimination of bound antigens. The antigen binding site is formed by the variable domain of one heavy chain, together with that of its associated light chain. Thus, each immunoglobulin has two antigen binding sites with remarkable affinity for a particular antigen. The variable domains are assembled by a process called V-(D)-J rearrangement and can then be subjected to somatic hypermutations which, after exposure to antigen and selection, allow affinity maturation for a particular antigen. The chain is Immunoglobulin heavy variable 2-70D from Homo sapiens (Human).